A 462-amino-acid polypeptide reads, in one-letter code: MVEISSISQTLRALRRKQYSCRDLVESLVSRSESATHLNAFAATDWLHLRNEADRVDRNGSGGVGLMGIPLCFKANIATGIFPTSAGTQGLLRHKPAIPAKIVERLHSAGALIGASGNMHELSFGITNDNKTFGPARNPWNQALISGGSSGGVAVSVAANLMLGGIGTDTGASVRLPAALCGVVGFRPTFGNYPTDGIVPVSPSRDTPGLIVRSVEDAVLLDRIIRNKCPTQNMSLKGLRLGLPRSHFFDNLEPHVAAASERAIRRLATNQMTFVEADIPNVAELTRKVSLPVAIYEFPRALMAYLSFHGIGNTFDELIQNIQDPQVYDLVQSQLSKGLISESVYRRALRCYKPRLKATYENYYSSNGLDAVLFPSVPLTAKPVGLQTTLVHNGVETDTFGIFVRNLDPSSNIGLPSLSVPVSLTPDRLPVGIQIEGPFGSDDMVLAIGRAVEEMVKFGQEY.

Active-site charge relay system residues include Lys-74 and Ser-149. The Acyl-ester intermediate role is filled by Ser-173.

The protein belongs to the amidase family.

The protein operates within plant hormone metabolism; auxin biosynthesis. Its function is as follows. Hydrolyzes indole-3-acetamide (IAM) into indole-3-acetic acid (IAA). This is Indoleacetamide hydrolase (iaaH) from Allorhizobium ampelinum (strain ATCC BAA-846 / DSM 112012 / S4) (Agrobacterium vitis (strain S4)).